The primary structure comprises 90 residues: Small ribosomal subunit protein bS18 (90 aa).

It belongs to the bacterial ribosomal protein bS18 family. As to quaternary structure, part of the 30S ribosomal subunit. Forms a tight heterodimer with protein bS6.

Binds as a heterodimer with protein bS6 to the central domain of the 16S rRNA, where it helps stabilize the platform of the 30S subunit. This chain is Small ribosomal subunit protein bS18, found in Bordetella bronchiseptica (strain ATCC BAA-588 / NCTC 13252 / RB50) (Alcaligenes bronchisepticus).